The primary structure comprises 505 residues: Maturase K (505 aa).

This sequence belongs to the intron maturase 2 family. MatK subfamily.

The protein resides in the plastid. It localises to the chloroplast. Its function is as follows. Usually encoded in the trnK tRNA gene intron. Probably assists in splicing its own and other chloroplast group II introns. In Phaulothamnus spinescens (Snake-eyes), this protein is Maturase K.